The sequence spans 36 residues: U-limacoditoxin(7)-Dv63 (36 aa).

An N-terminal signal peptide occupies residues 1 to 19; it reads MFKPRVILLITIIAVFSEF.

This sequence belongs to the limacoditoxin-7 family. In terms of tissue distribution, expressed by the venom secretory cell of the spine. The spine is a cuticular structure containing a single large nucleated venom-secreting cell at its base. It is an independent unit capable of producing, storing and injecting venom. On the back of D.vulnerans caterpillars, spines are grouped together by 50 to 100 to form scoli, of which there are eight in D.vulnerans.

It is found in the secreted. Its function is as follows. Peptide with insecticidal and antiparasitic activities. Induces irreversible paralysis in D.melanogaster when tested at high doses. It shows a moderate antiparasitic activity against the major pathogenic nematode of ruminants (H.contortus, EC(50)=41.3 uM). Does not show antimicrobial activities. Does not induce increase in intracellular calcium in mouse DRG neurons, suggesting that it does not induce pain. The protein is U-limacoditoxin(7)-Dv63 of Doratifera vulnerans (Mottled cup moth).